The following is a 519-amino-acid chain: Bifunctional dihydrofolate reductase-thymidylate synthase 1 (519 aa).

Alanine 2 carries the post-translational modification N-acetylalanine. One can recognise a DHFR domain in the interval 21 to 198; the sequence is TYQVVVAATK…LRFCFTTFVR (178 aa). A substrate-binding site is contributed by valine 25. Residues alanine 27 and 33–39 contribute to the NADP(+) site; that span reads GIGKDGK. Position 47 (aspartate 47) interacts with substrate. Residues 71 to 73 and 92 to 95 contribute to the NADP(+) site; these read RKT and LTRS. Isoleucine 134 contributes to the substrate binding site. 135–142 is an NADP(+) binding site; that stretch reads GGGDILRE. Substrate is bound at residue threonine 155. The hinge stretch occupies residues 201 to 234; that stretch reads SSADESSDESNGSQSLQFDGKKFLFLPKMVFDQH. The thymidylate synthase stretch occupies residues 235–519; sequence EEFLYLNMVE…HKKIEMKMAV (285 aa). Arginine 256 contacts dUMP. The active site involves cysteine 401. DUMP-binding positions include histidine 402, 420-424, asparagine 432, and 462-464; these read QRSAD and HVY.

The protein in the N-terminal section; belongs to the dihydrofolate reductase family. This sequence in the C-terminal section; belongs to the thymidylate synthase family. As to quaternary structure, heterodimer or homodimer.

It carries out the reaction (6S)-5,6,7,8-tetrahydrofolate + NADP(+) = 7,8-dihydrofolate + NADPH + H(+). It catalyses the reaction dUMP + (6R)-5,10-methylene-5,6,7,8-tetrahydrofolate = 7,8-dihydrofolate + dTMP. The protein operates within cofactor biosynthesis; tetrahydrofolate biosynthesis; 5,6,7,8-tetrahydrofolate from 7,8-dihydrofolate: step 1/1. Its function is as follows. Bifunctional enzyme. Involved in de novo dTMP biosynthesis. Key enzyme in folate metabolism. Can play two different roles depending on the source of dihydrofolate: de novo synthesis of tetrahydrofolate or recycling of the dihydrofolate released as one of the end products of the TS catalyzed reaction. Catalyzes an essential reaction for de novo glycine and purine synthesis, DNA precursor synthesis, and for the conversion of dUMP to dTMP. The protein is Bifunctional dihydrofolate reductase-thymidylate synthase 1 (THY-1) of Arabidopsis thaliana (Mouse-ear cress).